The primary structure comprises 1206 residues: DNA-directed RNA polymerase subunit beta' (1206 aa).

Zn(2+) is bound by residues Cys-60, Cys-62, Cys-75, and Cys-78. Mg(2+)-binding residues include Asp-449, Asp-451, and Asp-453. Residues Cys-818, Cys-892, Cys-899, and Cys-902 each contribute to the Zn(2+) site.

It belongs to the RNA polymerase beta' chain family. As to quaternary structure, the RNAP catalytic core consists of 2 alpha, 1 beta, 1 beta' and 1 omega subunit. When a sigma factor is associated with the core the holoenzyme is formed, which can initiate transcription. The cofactor is Mg(2+). It depends on Zn(2+) as a cofactor.

It catalyses the reaction RNA(n) + a ribonucleoside 5'-triphosphate = RNA(n+1) + diphosphate. In terms of biological role, DNA-dependent RNA polymerase catalyzes the transcription of DNA into RNA using the four ribonucleoside triphosphates as substrates. This is DNA-directed RNA polymerase subunit beta' from Shouchella clausii (strain KSM-K16) (Alkalihalobacillus clausii).